Consider the following 187-residue polypeptide: Benzene 1,2-dioxygenase subunit beta (187 aa).

Belongs to the bacterial ring-hydroxylating dioxygenase beta subunit family. In terms of assembly, this dioxygenase system consists of four proteins: the two subunits of the hydroxylase component (BnzA and BnzB), a ferredoxin (BnzC) and a ferredoxin reductase (BnzD). [2Fe-2S] cluster serves as cofactor. The cofactor is Fe cation.

The catalysed reaction is benzene + NADH + O2 + H(+) = cis-1,2-dihydrobenzene-1,2-diol + NAD(+). It catalyses the reaction toluene + NADH + O2 + H(+) = (1S,2R)-3-methylcyclohexa-3,5-diene-1,2-diol + NAD(+). It participates in aromatic compound metabolism; benzene degradation; catechol from benzene: step 1/2. Its pathway is xenobiotic degradation; toluene degradation. The protein operates within xenobiotic degradation; xylene degradation. Catalyzes both the oxidation of benzene and toluene. The beta subunit may be responsible for the substrate specificity of the enzyme. The protein is Benzene 1,2-dioxygenase subunit beta (bnzB) of Pseudomonas putida (strain ATCC 700007 / DSM 6899 / JCM 31910 / BCRC 17059 / LMG 24140 / F1).